Here is a 25-residue protein sequence, read N- to C-terminus: Antimicrobial peptide THP3 (25 aa).

The protein localises to the secreted. In terms of biological role, bactericidal activity; inhibits Staphylococcus aureus. This chain is Antimicrobial peptide THP3, found in Meleagris gallopavo (Wild turkey).